Consider the following 269-residue polypeptide: Troponin I (269 aa).

Residues 1–104 are disordered; it reads MADDEKKAAA…AKKGFMTPER (104 aa). Position 2 is an N-acetylalanine (Ala-2). The span at 9–50 shows a compositional bias: low complexity; that stretch reads AAPAAAPAAAAKPAAPAAAPAANGKAAPAANGKAAPAAAAAP. Over residues 56-91 the composition is skewed to basic and acidic residues; sequence DPNDPKVKAEEAKKAKQAEIERKRAEVRKRMEEASK. The segment at 162-171 is troponin T-interaction; sequence ERMYICEGQK. Residues 189-202 form an actin-binding region; the sequence is NAQVNDLRGKFVKP. Residues Lys-201 and Lys-205 each carry the N6,N6,N6-trimethyllysine modification. The interval 239-269 is disordered; it reads TLEEEEKEKKPDWSKGKPGDAKVKEEVEAEA.

This sequence belongs to the troponin I family. In terms of assembly, binds to actin and tropomyosin. All isoforms are expressed in somatic muscle. Isoforms containing exon 6a1 (isoforms 1 and 2) are expressed in all muscles but highest expression is in abdominal muscle and splanchnic muscle of the gut. Isoforms containing exon 6b1 (isoforms 5, 6, 9 and 10) are highly expressed in the tergal depressor of trochanter (TDT) muscle.

In terms of biological role, troponin I is the ATPase inhibitory subunit of troponin in the thin filament regulatory complex. Involved in the development and maintenance of muscle and nervous system. May also be involved in the cytoskeletal apparatus. This chain is Troponin I (wupA), found in Drosophila melanogaster (Fruit fly).